A 243-amino-acid polypeptide reads, in one-letter code: Lipid II isoglutaminyl synthase (glutamine-hydrolyzing) subunit GatD (243 aa).

The 192-residue stretch at 6 to 197 folds into the GATase cobBQ-type domain; sequence IYHFMSDKLN…LHGPILPKNY (192 aa). Cys94 serves as the catalytic Nucleophile. Residue Arg128 coordinates substrate. Residue His189 is part of the active site.

The protein belongs to the CobB/CobQ family. GatD subfamily. In terms of assembly, forms a heterodimer with MurT.

The catalysed reaction is beta-D-GlcNAc-(1-&gt;4)-Mur2Ac(oyl-L-Ala-gamma-D-Glu-L-Lys-D-Ala-D-Ala)-di-trans,octa-cis-undecaprenyl diphosphate + L-glutamine + ATP + H2O = beta-D-GlcNAc-(1-&gt;4)-Mur2Ac(oyl-L-Ala-D-isoglutaminyl-L-Lys-D-Ala-D-Ala)-di-trans,octa-cis-undecaprenyl diphosphate + L-glutamate + ADP + phosphate + H(+). The enzyme catalyses L-glutamine + H2O = L-glutamate + NH4(+). It participates in cell wall biogenesis; peptidoglycan biosynthesis. The lipid II isoglutaminyl synthase complex catalyzes the formation of alpha-D-isoglutamine in the cell wall lipid II stem peptide. The GatD subunit catalyzes the hydrolysis of glutamine to glutamate and ammonia. The resulting ammonia molecule is channeled to the active site of MurT. This is Lipid II isoglutaminyl synthase (glutamine-hydrolyzing) subunit GatD from Staphylococcus aureus (strain N315).